The following is an 84-amino-acid chain: Toxin Aah4 (84 aa).

The signal sequence occupies residues 1 to 19 (MNYLIMFSLALLLVIGVES). The 62-residue stretch at 21–82 (RDGYIVDSKN…PIKDPSDDCH (62 aa)) folds into the LCN-type CS-alpha/beta domain. Cystine bridges form between Cys31/Cys81, Cys35/Cys53, Cys39/Cys63, and Cys43/Cys65. Arg84 is a propeptide (removed by a carboxypeptidase).

This sequence belongs to the long (4 C-C) scorpion toxin superfamily. Sodium channel inhibitor family. Alpha subfamily. In terms of tissue distribution, expressed by the venom gland.

It localises to the secreted. In terms of biological role, alpha toxins bind voltage-independently at site-3 of sodium channels (Nav) and inhibit the inactivation of the activated channels, thereby blocking neuronal transmission. This toxin seems to specifically act on Nav1.6/SCN8A sodium channel. In vitro, it inhibits the proliferation of the prostate cancer cell line DU145 (IC(50)=15 uM). It shows low effect on the adhesion of DU145 cells to fibronectin (at 15 uM) and is inactive on DU145 cells migration. This chain is Toxin Aah4, found in Androctonus australis (Sahara scorpion).